The chain runs to 372 residues: MHLKSIRLQNYRNYETLELDFSEQTNVLIGENAQGKTNLLESIYVLALAKSHRTTQDRELIGWEADAASIEGRIHKRTGESVQSLSFSPKGKKAKLNHLEQRRLSDYVGAFNVVLFAPEDLAIVKGSPQGRRRFLDMEIGQVSPVYLHELNQYLKTLKQRNALLKQLSTKGGDETLLEVLTDQLIELAVKIVMRRYHFIDQLEKWANPIHSGITRDLETLTIQYVSDTFQKERFSKEQMFETYRQKFDKIRENERRRGVTLFGPHRDDFELYVNNRNVQTFGSQGQQRTAALSLKLAEIELIHEEVGEYPLLLLDDVLSELDDHRQTHLLDTMGRKVQTILTTTNIDGIAHETIQQAKVFHVKQGEVETESV.

30–37 (GENAQGKT) is a binding site for ATP.

This sequence belongs to the RecF family.

It is found in the cytoplasm. Its function is as follows. The RecF protein is involved in DNA metabolism; it is required for DNA replication and normal SOS inducibility. RecF binds preferentially to single-stranded, linear DNA. It also seems to bind ATP. This Exiguobacterium sp. (strain ATCC BAA-1283 / AT1b) protein is DNA replication and repair protein RecF.